Consider the following 355-residue polypeptide: Putative cyclin-A3-1 (355 aa).

The protein belongs to the cyclin family. Cyclin AB subfamily.

The protein is Putative cyclin-A3-1 (CYCA3-1) of Arabidopsis thaliana (Mouse-ear cress).